Consider the following 343-residue polypeptide: N-acetyl-gamma-glutamyl-phosphate reductase (343 aa).

The active site involves cysteine 147.

This sequence belongs to the NAGSA dehydrogenase family. Type 1 subfamily.

The protein localises to the cytoplasm. It catalyses the reaction N-acetyl-L-glutamate 5-semialdehyde + phosphate + NADP(+) = N-acetyl-L-glutamyl 5-phosphate + NADPH + H(+). It functions in the pathway amino-acid biosynthesis; L-arginine biosynthesis; N(2)-acetyl-L-ornithine from L-glutamate: step 3/4. Catalyzes the NADPH-dependent reduction of N-acetyl-5-glutamyl phosphate to yield N-acetyl-L-glutamate 5-semialdehyde. The protein is N-acetyl-gamma-glutamyl-phosphate reductase of Listeria innocua serovar 6a (strain ATCC BAA-680 / CLIP 11262).